Here is a 414-residue protein sequence, read N- to C-terminus: EARP and GARP complex-interacting protein 1 (414 aa).

An N-acetylmethionine modification is found at Met-1. 4 WD repeats span residues 159 to 199, 209 to 249, 253 to 293, and 297 to 337; these read TAHG…SQAV, KGQL…QIYC, AHGQ…EPVK, and EHSH…SEPF. Residues 337–362 form a disordered region; it reads FGHLVDDDDISDQEDHRSEEKSKEPL. Phosphoserine is present on Ser-347. Positions 349–362 are enriched in basic and acidic residues; sequence QEDHRSEEKSKEPL. Residues 372–412 form a WD 5 repeat; sequence EHEDSVYAVDWSSADPWLFASLSYDGRLVINRVPRALKYHI.

The protein belongs to the WD repeat EIPR1 family. In terms of assembly, interacts with two multisubunit tethering complexes: EARP composed of VPS50, VPS51, VPS52 and VPS53 subunits and GARP complex composed of VPS51, VPS52, VPS53 and VPS54 subunits. Interacts with SNAP29.

The protein resides in the golgi apparatus. The protein localises to the trans-Golgi network. In terms of biological role, acts as a component of endosomal retrieval machinery that is involved in protein transport from early endosomes to either recycling endosomes or the trans-Golgi network. Mediates the recruitment of Golgi-associated retrograde protein (GARP) complex to the trans-Golgi network and controls early endosome-to-Golgi transport of internalized protein. Promotes the recycling of internalized transferrin receptor (TFRC) to the plasma membrane through interaction with endosome-associated recycling protein (EARP) complex. Controls proper insulin distribution and secretion, and retention of cargo in mature dense core vesicles. Required for the stability of the endosome-associated retrograde protein (EARP) complex subunits and for proper localization and association of EARP with membranes. The polypeptide is EARP and GARP complex-interacting protein 1 (Pongo abelii (Sumatran orangutan)).